The primary structure comprises 244 residues: Cytochrome c1 (244 aa).

The N-terminal stretch at 1-19 is a signal peptide; sequence MRKLILATFLLLAPTALLA. The heme c site is built by Cys-50, Cys-53, and His-54. Residues 220–240 form a helical membrane-spanning segment; the sequence is YVLLFLGFLFILAYLLKKEYW.

In terms of assembly, the main subunits of complex b-c1 are: cytochrome b, cytochrome c1 and the Rieske protein. In terms of processing, binds 1 heme c group covalently per subunit.

The protein localises to the cell membrane. Its function is as follows. Component of the ubiquinol-cytochrome c reductase complex (complex III or cytochrome b-c1 complex), which is a respiratory chain that generates an electrochemical potential coupled to ATP synthesis. c1 functions as an electron donor to cytochrome c. The chain is Cytochrome c1 (petC) from Allochromatium vinosum (strain ATCC 17899 / DSM 180 / NBRC 103801 / NCIMB 10441 / D) (Chromatium vinosum).